A 662-amino-acid polypeptide reads, in one-letter code: MAAENEASQESALGAYSPVDYMSITSFPRLPEDEPAPAAPLRGRKDEDAFLGDPDTDPDSFLKSARLQRLPSSSSEMGSQDGSPLRETRKDPFSAAAAECSCRQDGLTVIVTACLTFATGVTVALVMQIYFGDPQIFQQGAVVTDASCCTALGMEVLSKQGSSVDAAVAAALCLGIVAPHSSGLGGGGVMLVHDIRRNESHLIDFRESAPGALREEALQRSWDTKPGLLVGVPGMVKGLYEAHQLYGRLPWSQVLAFAAAVAQDGFNVTHDLAHALAEQLPPNASDRFLETFLPLGHPPLPGSLLRRPDLAEVLDILGISGPAAFYNGGNLTLEMVAEVQHAGGVMTEEDFSNYSALTEKPVCGVYRGHLVLSPPPPHTGPALISALNILEGFNLTSLVSREQALHWVAETLKIALALASRLGDPVYDSTISESMDDMLSKVEAANFRGHISDSQAAPAPLLPVYELDGAPTAAQVLVMGPDDFIVAMVSSLNRPFGSGLLTPSGILLNSQMLDFSWPNRTANHSAPSLENSVQPGKRPLSFLLPTVVRPAEGLCGTYLALGANGAARGLSGLTQVLLNVLTLNRNLSDSLARGRLHPDLQSNVLQVDSEFTEEEIEFLEARGHHVEKVDVLSWVHGSRRTNNFIIGVKDPRSLDATGASIL.

Topologically, residues 1 to 106 (MAAENEASQE…AAECSCRQDG (106 aa)) are cytoplasmic. 4 positions are modified to phosphoserine: Ser-17, Ser-72, Ser-79, and Ser-83. Residues 26-90 (SFPRLPEDEP…DGSPLRETRK (65 aa)) are disordered. The segment covering 72-83 (SSSSEMGSQDGS) has biased composition (low complexity). The chain crosses the membrane as a helical; Signal-anchor for type II membrane protein span at residues 107–127 (LTVIVTACLTFATGVTVALVM). Residues 128 to 662 (QIYFGDPQIF…SLDATGASIL (535 aa)) lie on the Extracellular side of the membrane. N-linked (GlcNAc...) asparagine glycans are attached at residues Asn-198, Asn-267, Asn-283, Asn-330, Asn-353, Asn-394, Asn-519, Asn-523, and Asn-586.

It belongs to the gamma-glutamyltransferase family. Heterodimer composed of the light and heavy chains. The active site is located in the light chain. Cleaved by autocatalysis into a large and a small subunit and the autocatalytic cleavage is essential to the functional activation of the enzyme.

The protein resides in the membrane. The enzyme catalyses an N-terminal (5-L-glutamyl)-[peptide] + an alpha-amino acid = 5-L-glutamyl amino acid + an N-terminal L-alpha-aminoacyl-[peptide]. The catalysed reaction is glutathione + H2O = L-cysteinylglycine + L-glutamate. It carries out the reaction an S-substituted glutathione + H2O = an S-substituted L-cysteinylglycine + L-glutamate. Its pathway is sulfur metabolism; glutathione metabolism. Functionally, hydrolyzes and transfers gamma-glutamyl moieties from glutathione and other gamma-glutamyl compounds to acceptors. This Rattus norvegicus (Rat) protein is Glutathione hydrolase 7.